Reading from the N-terminus, the 352-residue chain is Cyclin-O (352 aa).

Positions 1-40 (MVTPCPASPGSPAAGAGRRDSHQNLRAPVKKSRRPCLRRK) are disordered. A compositionally biased stretch (basic residues) spans 28–40 (PVKKSRRPCLRRK). The residue at position 83 (Ser-83) is a Phosphoserine.

This sequence belongs to the cyclin family. In terms of tissue distribution, present in respiratory cells (at protein level). Expressed in multiciliated tissue in brain and fallopian tube (at protein level). Highly expressed in oocytes.

Its subcellular location is the cytoplasm. It localises to the nucleus. The protein localises to the nucleolus. Its function is as follows. Specifically required for generation of multiciliated cells, possibly by promoting a cell cycle state compatible with centriole amplification and maturation. Acts downstream of MCIDAS to promote mother centriole amplification and maturation in preparation for apical docking. May be involved in apoptosis in lymphoid cells; however, this result requires additional evidences in vivo. May be involved in oocyte meiotic resumption in oocytes. This is Cyclin-O from Mus musculus (Mouse).